We begin with the raw amino-acid sequence, 231 residues long: Ribonuclease HII (231 aa).

An RNase H type-2 domain is found at Gly23–Leu214. Residues Asp29, Glu30, and Asp123 each contribute to the a divalent metal cation site.

The protein belongs to the RNase HII family. Mn(2+) serves as cofactor. The cofactor is Mg(2+).

The protein resides in the cytoplasm. It carries out the reaction Endonucleolytic cleavage to 5'-phosphomonoester.. In terms of biological role, endonuclease that specifically degrades the RNA of RNA-DNA hybrids. The sequence is that of Ribonuclease HII from Corynebacterium efficiens (strain DSM 44549 / YS-314 / AJ 12310 / JCM 11189 / NBRC 100395).